A 953-amino-acid polypeptide reads, in one-letter code: Translation initiation factor IF-2 (953 aa).

Residues 55 to 340 form a disordered region; it reads GVTTEAPAAS…KSKRQKRNEY (286 aa). The span at 81-93 shows a compositional bias: low complexity; that stretch reads KPAATPQQAAKPA. Pro residues predominate over residues 110–119; the sequence is PKPAAKPVPK. Low complexity-rich tracts occupy residues 123–133 and 143–160; these read SAAKAESSAPK and KPAA…MPRP. The segment covering 202–219 has biased composition (gly residues); sequence PGGGPRPGGNRPQGGQGG. Over residues 233–248 the composition is skewed to low complexity; the sequence is QPRPQGGSRSQQSGGQ. Positions 280–323 are enriched in gly residues; sequence NGRGGAGGQGGRPGFGGGRPGGGGSAGGRGGRRGGTAGAFGRPG. The segment covering 327–336 has biased composition (basic residues); sequence RKGRKSKRQK. Residues 449–621 enclose the tr-type G domain; the sequence is KRPPVVTVMG…VLLTADASLD (173 aa). The tract at residues 458 to 465 is G1; it reads GHVDHGKT. Residue 458–465 coordinates GTP; sequence GHVDHGKT. The segment at 483–487 is G2; that stretch reads GITQG. Residues 508-511 form a G3 region; that stretch reads DTPG. GTP-binding positions include 508-512 and 562-565; these read DTPGH and NKID. The G4 stretch occupies residues 562–565; it reads NKID. A G5 region spans residues 598–600; that stretch reads SAK.

The protein belongs to the TRAFAC class translation factor GTPase superfamily. Classic translation factor GTPase family. IF-2 subfamily.

It localises to the cytoplasm. One of the essential components for the initiation of protein synthesis. Protects formylmethionyl-tRNA from spontaneous hydrolysis and promotes its binding to the 30S ribosomal subunits. Also involved in the hydrolysis of GTP during the formation of the 70S ribosomal complex. This is Translation initiation factor IF-2 from Corynebacterium diphtheriae (strain ATCC 700971 / NCTC 13129 / Biotype gravis).